Consider the following 457-residue polypeptide: Aromatic amino acid transport protein AroP (457 aa).

Residues 1–19 (MMEGQQHGEQLKRGLKNRH) are Cytoplasmic-facing. A helical membrane pass occupies residues 20–40 (IQLIALGGAIGTGLFLGSASV). Topologically, residues 41-42 (IQ) are periplasmic. The helical transmembrane segment at 43 to 63 (SAGPGIILGYAIAGFIAFLIM) threads the bilayer. The Cytoplasmic segment spans residues 64–86 (RQLGEMVVEEPVAGSFSHFAYKY). A helical transmembrane segment spans residues 87–107 (WGSFAGFASGWNYWVLYVLVA). Topologically, residues 108 to 117 (MAELTAVGKY) are periplasmic. Residues 118 to 138 (IQFWYPEIPTWVSAAVFFVVI) traverse the membrane as a helical segment. Residues 139 to 155 (NAINLTNVTVFGEMEFW) are Cytoplasmic-facing. Residues 156-176 (FAIIKVIAVVAMIIFGGWLLF) form a helical membrane-spanning segment. Over 177 to 201 (SGNGGPQASVSNLWDQGGFLPHGFT) the chain is Periplasmic. The chain crosses the membrane as a helical span at residues 202–222 (GLVMMMAIIMFSFGGLELVGI). Residues 223 to 240 (TAAEADNPEQSIPKATNQ) lie on the Cytoplasmic side of the membrane. A helical membrane pass occupies residues 241 to 261 (VIYRILIFYIGSLAVLLSLMP). The Periplasmic segment spans residues 262-271 (WTRVTADTSP). The helical transmembrane segment at 272–292 (FVLIFHELGDTFVANALNIVV) threads the bilayer. Residues 293–333 (LTAALSVYNSCVYCNSRMLFGLAQQGNAPKALASVDKRGVP) lie on the Cytoplasmic side of the membrane. Residues 334 to 354 (VNTILVSALVTALCVLINYLA) traverse the membrane as a helical segment. Residues 355–358 (PESA) are Periplasmic-facing. Residues 359–379 (FGLLMALVVSALVINWAMISL) traverse the membrane as a helical segment. Topologically, residues 380–407 (AHMKFRRAKQEQGVVTRFPALLYPLGNW) are cytoplasmic. The helical transmembrane segment at 408-428 (ICLLFMAVVLVIMLMTPGMAI) threads the bilayer. Residue S429 is a topological domain, periplasmic. The chain crosses the membrane as a helical span at residues 430 to 450 (VYLIPVWLVVLGIGYLFKEKT). At 451 to 457 (AKAVKAH) the chain is on the cytoplasmic side.

This sequence belongs to the amino acid-polyamine-organocation (APC) superfamily. Amino acid transporter (AAT) (TC 2.A.3.1) family.

The protein resides in the cell inner membrane. The catalysed reaction is L-phenylalanine(in) + H(+)(in) = L-phenylalanine(out) + H(+)(out). It catalyses the reaction L-tryptophan(in) + H(+)(in) = L-tryptophan(out) + H(+)(out). The enzyme catalyses L-tyrosine(in) + H(+)(in) = L-tyrosine(out) + H(+)(out). In terms of biological role, permease that is involved in the active transport across the cytoplasmic membrane of all three aromatic amino acids, phenylalanine, tyrosine and tryptophan. In Escherichia coli O157:H7, this protein is Aromatic amino acid transport protein AroP (aroP).